Consider the following 477-residue polypeptide: Glutamyl-tRNA(Gln) amidotransferase subunit A (477 aa).

Active-site charge relay system residues include Lys-71 and Ser-146. Ser-170 serves as the catalytic Acyl-ester intermediate.

It belongs to the amidase family. GatA subfamily. As to quaternary structure, heterotrimer of A, B and C subunits.

It catalyses the reaction L-glutamyl-tRNA(Gln) + L-glutamine + ATP + H2O = L-glutaminyl-tRNA(Gln) + L-glutamate + ADP + phosphate + H(+). Allows the formation of correctly charged Gln-tRNA(Gln) through the transamidation of misacylated Glu-tRNA(Gln) in organisms which lack glutaminyl-tRNA synthetase. The reaction takes place in the presence of glutamine and ATP through an activated gamma-phospho-Glu-tRNA(Gln). This chain is Glutamyl-tRNA(Gln) amidotransferase subunit A, found in Halothermothrix orenii (strain H 168 / OCM 544 / DSM 9562).